We begin with the raw amino-acid sequence, 113 residues long: Putative single-stranded DNA-binding protein ycf41 (113 aa).

In terms of domain architecture, SSB spans 1–101; it reads MNYASFIIKI…EVSGFKIYPF (101 aa).

It is found in the plastid. Its subcellular location is the chloroplast. This chain is Putative single-stranded DNA-binding protein ycf41 (ycf41), found in Trieres chinensis (Marine centric diatom).